The primary structure comprises 530 residues: UPF0422 protein lpg2959 (530 aa).

The N-terminal stretch at 1 to 19 (MKFKKIILALACLSSPLYA) is a signal peptide. Residues 20–66 (DQDQQLKSEIQRLQHQAEDLQAQLNRLQKQLANHKSSQQKHEQQAAA) are a coiled coil. Residues 50–81 (LANHKSSQQKHEQQAAAKPAEPQSKPTVKSGA) are disordered. The span at 63 to 75 (QAAAKPAEPQSKP) shows a compositional bias: low complexity.

It belongs to the UPF0422 family.

This chain is UPF0422 protein lpg2959, found in Legionella pneumophila subsp. pneumophila (strain Philadelphia 1 / ATCC 33152 / DSM 7513).